Consider the following 453-residue polypeptide: Tubulin beta-1 chain (453 aa).

Q12, E71, S140, G144, T145, G146, N206, and N228 together coordinate GTP. E71 lines the Mg(2+) pocket. The interval T431–E453 is disordered. Acidic residues predominate over residues E436–E453.

This sequence belongs to the tubulin family. In terms of assembly, dimer of alpha and beta chains. A typical microtubule is a hollow water-filled tube with an outer diameter of 25 nm and an inner diameter of 15 nM. Alpha-beta heterodimers associate head-to-tail to form protofilaments running lengthwise along the microtubule wall with the beta-tubulin subunit facing the microtubule plus end conferring a structural polarity. Microtubules usually have 13 protofilaments but different protofilament numbers can be found in some organisms and specialized cells. It depends on Mg(2+) as a cofactor.

Its subcellular location is the cytoplasm. It localises to the cytoskeleton. In terms of biological role, tubulin is the major constituent of microtubules, a cylinder consisting of laterally associated linear protofilaments composed of alpha- and beta-tubulin heterodimers. Microtubules grow by the addition of GTP-tubulin dimers to the microtubule end, where a stabilizing cap forms. Below the cap, tubulin dimers are in GDP-bound state, owing to GTPase activity of alpha-tubulin. This chain is Tubulin beta-1 chain (TUBB), found in Chondrus crispus (Carrageen Irish moss).